Consider the following 62-residue polypeptide: Photosystem II reaction center protein Z (62 aa).

The next 2 membrane-spanning stretches (helical) occupy residues 8 to 28 and 41 to 61; these read AVFALIVTSSVLVISVPLVFA and FSGTSLWIGLVFLVAILNSLI.

This sequence belongs to the PsbZ family. PSII is composed of 1 copy each of membrane proteins PsbA, PsbB, PsbC, PsbD, PsbE, PsbF, PsbH, PsbI, PsbJ, PsbK, PsbL, PsbM, PsbT, PsbY, PsbZ, Psb30/Ycf12, at least 3 peripheral proteins of the oxygen-evolving complex and a large number of cofactors. It forms dimeric complexes.

The protein resides in the plastid. Its subcellular location is the chloroplast thylakoid membrane. May control the interaction of photosystem II (PSII) cores with the light-harvesting antenna, regulates electron flow through the 2 photosystem reaction centers. PSII is a light-driven water plastoquinone oxidoreductase, using light energy to abstract electrons from H(2)O, generating a proton gradient subsequently used for ATP formation. This is Photosystem II reaction center protein Z from Oryza nivara (Indian wild rice).